The primary structure comprises 554 residues: MAIQHPDIQPAVNHSVQVAIAGAGPVGLMMANYLGQMGIDVLVVEKLDKLIDYPRAIGIDDEALRTMQSVGLVENVLPHTTPWHAMRFLTPKGRCFADIQPMTDEFGWPRRNAFIQPQVDAVMLEGLSRFPNVRCLFARELEAFSQQNDEVTLHLKTAEGQREIVKAQWLVACDGGASFVRRTLNVPFEGKTAPNQWIVVDIANDPLSTPHIYLCGDPVRPYVSAALPHAVRRFEFMVMPGETEEQLREPQNMRKLLSKVLPNPDNVELIRQRVYTHNARLAQRFRIDRVLLAGDAAHIMPVWQGQGYNSGMRDAFNLAWKLALVIQGKARDALLDTYQQERRDHAKAMIDLSVTAGNVLAPPKRWQGTLRDGVSWLLNYLPPVKRYFLEMRFKPMPQYYGGALVREGEAKHSPVGKMFIQPKVTLENGDVTLLDNAIGANFAVIGWGCNPLWGMSDEQIQQWRALGTRFIQVVPEVQIHTAQDNHDGVLRVGDTQGRLRSWFAQHNASLVVMRPDRFVAATAIPQTLGKTLNKLASVMTLTRPDADVSVEKVA.

FAD is bound by residues 17–46 and 285–295; these read QVAI…VVEK and FRIDRVLLAGD.

It belongs to the PheA/TfdB FAD monooxygenase family. It depends on FAD as a cofactor.

It carries out the reaction 3-(3-hydroxyphenyl)propanoate + NADH + O2 + H(+) = 3-(2,3-dihydroxyphenyl)propanoate + NAD(+) + H2O. The catalysed reaction is (2E)-3-(3-hydroxyphenyl)prop-2-enoate + NADH + O2 + H(+) = (2E)-3-(2,3-dihydroxyphenyl)prop-2-enoate + NAD(+) + H2O. It functions in the pathway aromatic compound metabolism; 3-phenylpropanoate degradation. Catalyzes the insertion of one atom of molecular oxygen into position 2 of the phenyl ring of 3-(3-hydroxyphenyl)propionate (3-HPP) and hydroxycinnamic acid (3HCI). In Escherichia coli O8 (strain IAI1), this protein is 3-(3-hydroxy-phenyl)propionate/3-hydroxycinnamic acid hydroxylase.